The chain runs to 931 residues: Netrin receptor UNC5C (931 aa).

A signal peptide spans 1-39; it reads MGKGLEGTAARCGLGMGYLLHSVVLPALAVLGASRPGSA. Residues 40-380 are Extracellular-facing; it reads AQDDDFFHEL…APDSDDVALY (341 aa). Positions 62 to 159 constitute an Ig-like domain; that stretch reads PHFLIEPEEA…AGTTKSRKAY (98 aa). 9 disulfides stabilise this stretch: Cys-83/Cys-144, Cys-95/Cys-142, Cys-188/Cys-239, Cys-272/Cys-309, Cys-276/Cys-313, Cys-287/Cys-299, Cys-328/Cys-362, Cys-332/Cys-367, and Cys-340/Cys-352. The Ig-like C2-type domain occupies 161-256; the sequence is RIAYLRKTFE…KRKSTTATVI (96 aa). Residue Asn-236 is glycosylated (N-linked (GlcNAc...) asparagine). TSP type-1 domains are found at residues 260 to 314 and 316 to 368; these read NGGW…TLCP and DGKW…GLCM. N-linked (GlcNAc...) asparagine glycosylation is present at Asn-361. A helical transmembrane segment spans residues 381–401; the sequence is VGIVIAVIVCLAISVVVALFV. Residues 402–931 are Cytoplasmic-facing; sequence YRKNHRDFES…VVSLAAEGNY (530 aa). A ZU5 domain is found at 530 to 664; the sequence is CTAFGTFNSL…EACHILTETL (135 aa). Positions 850–929 constitute a Death domain; sequence QKLCSSLDAP…ETVVSLAAEG (80 aa).

The protein belongs to the unc-5 family. As to expression, restricted to proprioceptive neurons.

It is found in the cell membrane. The protein localises to the cell surface. The protein resides in the synapse. Its subcellular location is the synaptosome. It localises to the cell projection. It is found in the axon. The protein localises to the dendrite. The protein resides in the growth cone. Its subcellular location is the lamellipodium. It localises to the filopodium. Its function is as follows. Receptor for netrin required for axon guidance. Mediates axon repulsion of neuronal growth cones in the developing nervous system upon ligand binding. Involved in dorsal root ganglion axon projection towards the spinal cord. The sequence is that of Netrin receptor UNC5C (UNC5C) from Gallus gallus (Chicken).